A 569-amino-acid polypeptide reads, in one-letter code: Urease subunit alpha (569 aa).

Positions glycine 131–phenylalanine 569 constitute a Urease domain. 3 residues coordinate Ni(2+): histidine 136, histidine 138, and lysine 219. Lysine 219 carries the N6-carboxylysine modification. Histidine 221 is a binding site for substrate. Positions 248 and 274 each coordinate Ni(2+). The Proton donor role is filled by histidine 322. Aspartate 362 lines the Ni(2+) pocket.

Belongs to the metallo-dependent hydrolases superfamily. Urease alpha subunit family. Heterotrimer of UreA (gamma), UreB (beta) and UreC (alpha) subunits. Three heterotrimers associate to form the active enzyme. Requires Ni cation as cofactor. Carboxylation allows a single lysine to coordinate two nickel ions.

The protein resides in the cytoplasm. It carries out the reaction urea + 2 H2O + H(+) = hydrogencarbonate + 2 NH4(+). It functions in the pathway nitrogen metabolism; urea degradation; CO(2) and NH(3) from urea (urease route): step 1/1. This is Urease subunit alpha from Magnetococcus marinus (strain ATCC BAA-1437 / JCM 17883 / MC-1).